Here is a 345-residue protein sequence, read N- to C-terminus: S-adenosylmethionine:tRNA ribosyltransferase-isomerase (345 aa).

The protein belongs to the QueA family. As to quaternary structure, monomer.

The protein resides in the cytoplasm. The catalysed reaction is 7-aminomethyl-7-carbaguanosine(34) in tRNA + S-adenosyl-L-methionine = epoxyqueuosine(34) in tRNA + adenine + L-methionine + 2 H(+). The protein operates within tRNA modification; tRNA-queuosine biosynthesis. Transfers and isomerizes the ribose moiety from AdoMet to the 7-aminomethyl group of 7-deazaguanine (preQ1-tRNA) to give epoxyqueuosine (oQ-tRNA). The sequence is that of S-adenosylmethionine:tRNA ribosyltransferase-isomerase from Shewanella sp. (strain MR-7).